Reading from the N-terminus, the 146-residue chain is Hemoglobin subunit beta (146 aa).

At valine 1 the chain carries N-acetylvaline. A Globin domain is found at 2-146 (HLTAEEKDAV…VANALAHRYH (145 aa)). Serine 44 carries the post-translational modification Phosphoserine. Residue lysine 59 is modified to N6-acetyllysine. A heme b-binding site is contributed by histidine 63. Lysine 82 is modified (N6-acetyllysine). Histidine 92 lines the heme b pocket. The residue at position 93 (cysteine 93) is an S-nitrosocysteine.

Belongs to the globin family. In terms of assembly, heterotetramer of two alpha chains and two beta chains. In terms of tissue distribution, red blood cells.

Its function is as follows. Involved in oxygen transport from the lung to the various peripheral tissues. This Hippopotamus amphibius (Hippopotamus) protein is Hemoglobin subunit beta (HBB).